We begin with the raw amino-acid sequence, 233 residues long: DnaA regulatory inactivator Hda (233 aa).

This sequence belongs to the DnaA family. HdA subfamily. In terms of assembly, the active form seems to be an ADP-bound monomer. Forms the RIDA complex (regulatory inactivation of DnaA) of ATP-DnaA, ADP-Hda and the DNA-loaded beta sliding clamp (dnaN).

Functionally, mediates the interaction of DNA replication initiator protein DnaA with DNA polymerase subunit beta sliding clamp (dnaN). Stimulates hydrolysis of ATP-DnaA to ADP-DnaA, rendering DnaA inactive for reinitiation, a process called regulatory inhibition of DnaA or RIDA. This Shigella boydii serotype 4 (strain Sb227) protein is DnaA regulatory inactivator Hda.